Reading from the N-terminus, the 85-residue chain is MNYLVMVSFALLLMTGVESVRDGYIALPHNCAYGCLLNEFCNDLCTKNGAKIGYCNIQGKYGNACWCIELPDNVPIRVPGRCHPS.

An N-terminal signal peptide occupies residues 1–19 (MNYLVMVSFALLLMTGVES). One can recognise an LCN-type CS-alpha/beta domain in the interval 21–83 (RDGYIALPHN…VPIRVPGRCH (63 aa)). 4 disulfide bridges follow: Cys-31–Cys-82, Cys-35–Cys-55, Cys-41–Cys-65, and Cys-45–Cys-67.

Belongs to the long (4 C-C) scorpion toxin superfamily. Sodium channel inhibitor family. Alpha subfamily. In terms of tissue distribution, expressed by the venom gland.

It localises to the secreted. Alpha toxins bind voltage-independently at site-3 of sodium channels (Nav) and inhibit the inactivation of the activated channels, thereby blocking neuronal transmission. The chain is Toxin BmKaTx10 from Olivierus martensii (Manchurian scorpion).